The sequence spans 288 residues: Polyamine aminopropyltransferase (288 aa).

A PABS domain is found at Ile11–Lys245. Gln36 serves as a coordination point for S-methyl-5'-thioadenosine. The spermidine site is built by His67 and Asp91. S-methyl-5'-thioadenosine contacts are provided by residues Glu111 and Asp148–Gly149. The active-site Proton acceptor is Asp166. Asp166 to Asp169 contacts spermidine. Pro173 contacts S-methyl-5'-thioadenosine.

It belongs to the spermidine/spermine synthase family. As to quaternary structure, homodimer or homotetramer.

It is found in the cytoplasm. It carries out the reaction S-adenosyl 3-(methylsulfanyl)propylamine + agmatine = N(1)-(3-aminopropyl)agmatine + S-methyl-5'-thioadenosine + H(+). It catalyses the reaction S-adenosyl 3-(methylsulfanyl)propylamine + putrescine = S-methyl-5'-thioadenosine + spermidine + H(+). The enzyme catalyses cadaverine + S-adenosyl 3-(methylsulfanyl)propylamine = aminopropylcadaverine + S-methyl-5'-thioadenosine + H(+). It participates in amine and polyamine biosynthesis; spermidine biosynthesis; spermidine from putrescine: step 1/1. Involved in the biosynthesis of polyamines which are thought to support the growth of thermophilic microorganisms under high-temperature conditions. It seems that long-chain and branched-chain of polyamines effectively stabilize DNA and RNA, respectively. Catalyzes the irreversible transfer of a propylamine group from the amino donor S-adenosylmethioninamine (decarboxy-AdoMet) to agmatine to yield N1-aminopropylagmatine. It can also use cadaverine (1,5-diaminopentane) and putrescine (1,4-diaminobutane) as substrate with a lower activity than that of agmatine. The reaction involves a nucleophilic attack on the C-3 methylene of the propylamine moiety adjacent to the positively charged sulfur of decarboxy-AdoMet. In Thermococcus kodakarensis (strain ATCC BAA-918 / JCM 12380 / KOD1) (Pyrococcus kodakaraensis (strain KOD1)), this protein is Polyamine aminopropyltransferase.